Here is a 998-residue protein sequence, read N- to C-terminus: Protein Smaug (998 aa).

Residues 1–37 show a composition bias toward polar residues; the sequence is MKYATGTDNAMTSGISGQTNSSNSASNEMQPTTSTPT. 3 disordered regions span residues 1-45, 50-69, and 329-370; these read MKYA…EATS, TATY…QSQP, and LCPA…GSSS. Residues 329 to 338 are compositionally biased toward low complexity; it reads LCPASGSRSS. 2 positions are modified to phosphoserine: Ser564 and Ser575. The tract at residues 583–763 is interaction with cup; the sequence is EFKPNYIKFH…KDLKFKLSKM (181 aa). The 55-residue stretch at 600 to 654 folds into the SAM domain; the sequence is GIGLWLKSLRLHKYIELFKNMTYEEMLLITEDFLQSVGVTKGASHKLALCIDKLK. Disordered stretches follow at residues 773 to 892 and 943 to 977; these read HVKP…MQQM and NGSN…QQPK. Polar residues-rich tracts occupy residues 801 to 822 and 854 to 864; these read KSGS…NFSL and HQPQYKSSSYP. Position 971 is a phosphoserine (Ser971).

It belongs to the SMAUG family. As to quaternary structure, interacts with oskar (osk). Binds to the 3'-UTR of nos. Interacts with cup, which in turn recruits eIF4-E, leading to an indirect interaction between smg and eIF4-E that prevents mRNA translation.

The protein resides in the cytoplasm. Its function is as follows. Translation regulator that binds to the 3'-UTR of specific mRNAs such as nanos (nos) and prevent their translation. Prevents translation of unlocalized nos in the bulk cytoplasm via the recruitment of cup. This Drosophila sechellia (Fruit fly) protein is Protein Smaug.